The following is a 424-amino-acid chain: Enolase (424 aa).

A (2R)-2-phosphoglycerate-binding site is contributed by Q165. The active-site Proton donor is the E207. Residues D244, E283, and D310 each contribute to the Mg(2+) site. Residues K335, R364, S365, and K386 each contribute to the (2R)-2-phosphoglycerate site. K335 functions as the Proton acceptor in the catalytic mechanism.

The protein belongs to the enolase family. Requires Mg(2+) as cofactor.

It is found in the cytoplasm. Its subcellular location is the secreted. It localises to the cell surface. It carries out the reaction (2R)-2-phosphoglycerate = phosphoenolpyruvate + H2O. It participates in carbohydrate degradation; glycolysis; pyruvate from D-glyceraldehyde 3-phosphate: step 4/5. In terms of biological role, catalyzes the reversible conversion of 2-phosphoglycerate (2-PG) into phosphoenolpyruvate (PEP). It is essential for the degradation of carbohydrates via glycolysis. This chain is Enolase, found in Chlamydia felis (strain Fe/C-56) (Chlamydophila felis).